Consider the following 265-residue polypeptide: Mlc titration factor A (265 aa).

The Zn(2+) site is built by His-111, His-148, His-152, and Glu-211.

The protein belongs to the MtfA family. As to quaternary structure, interacts with Mlc. Requires Zn(2+) as cofactor.

The protein localises to the cytoplasm. In terms of biological role, involved in the modulation of the activity of the glucose-phosphotransferase system (glucose-PTS). Interacts with the transcriptional repressor Mlc, preventing its interaction with DNA and leading to the modulation of expression of genes regulated by Mlc, including ptsG, which encodes the PTS system glucose-specific EIICB component. Functionally, shows zinc-dependent metallopeptidase activity. This is Mlc titration factor A from Salmonella gallinarum (strain 287/91 / NCTC 13346).